The sequence spans 477 residues: Bifunctional protein HldE (477 aa).

The interval 1–318 (MKVTLPEFER…ENAVRGRAET (318 aa)) is ribokinase. Residue 195 to 198 (NLSE) coordinates ATP. The active site involves Asp264. Positions 344–477 (MTNGVFDILH…IKKIQKDSDK (134 aa)) are cytidylyltransferase.

This sequence in the N-terminal section; belongs to the carbohydrate kinase PfkB family. The protein in the C-terminal section; belongs to the cytidylyltransferase family. In terms of assembly, homodimer.

The catalysed reaction is D-glycero-beta-D-manno-heptose 7-phosphate + ATP = D-glycero-beta-D-manno-heptose 1,7-bisphosphate + ADP + H(+). It carries out the reaction D-glycero-beta-D-manno-heptose 1-phosphate + ATP + H(+) = ADP-D-glycero-beta-D-manno-heptose + diphosphate. Its pathway is nucleotide-sugar biosynthesis; ADP-L-glycero-beta-D-manno-heptose biosynthesis; ADP-L-glycero-beta-D-manno-heptose from D-glycero-beta-D-manno-heptose 7-phosphate: step 1/4. The protein operates within nucleotide-sugar biosynthesis; ADP-L-glycero-beta-D-manno-heptose biosynthesis; ADP-L-glycero-beta-D-manno-heptose from D-glycero-beta-D-manno-heptose 7-phosphate: step 3/4. Catalyzes the phosphorylation of D-glycero-D-manno-heptose 7-phosphate at the C-1 position to selectively form D-glycero-beta-D-manno-heptose-1,7-bisphosphate. In terms of biological role, catalyzes the ADP transfer from ATP to D-glycero-beta-D-manno-heptose 1-phosphate, yielding ADP-D-glycero-beta-D-manno-heptose. The protein is Bifunctional protein HldE of Klebsiella pneumoniae (strain 342).